A 226-amino-acid chain; its full sequence is Orotidine 5'-phosphate decarboxylase (226 aa).

Substrate contacts are provided by residues Asp-8, Lys-30, 58-67, Thr-117, Arg-177, Gln-186, Gly-206, and Arg-207; that span reads DLKIHDIPNT. The Proton donor role is filled by Lys-60.

This sequence belongs to the OMP decarboxylase family. Type 1 subfamily. As to quaternary structure, homodimer.

It carries out the reaction orotidine 5'-phosphate + H(+) = UMP + CO2. Its pathway is pyrimidine metabolism; UMP biosynthesis via de novo pathway; UMP from orotate: step 2/2. Functionally, catalyzes the decarboxylation of orotidine 5'-monophosphate (OMP) to uridine 5'-monophosphate (UMP). This chain is Orotidine 5'-phosphate decarboxylase, found in Campylobacter jejuni subsp. doylei (strain ATCC BAA-1458 / RM4099 / 269.97).